A 532-amino-acid polypeptide reads, in one-letter code: Zinc metalloproteinase nas-29 (532 aa).

The first 22 residues, methionine 1 to alanine 22, serve as a signal peptide directing secretion. Asparagine 5, asparagine 27, asparagine 70, and asparagine 106 each carry an N-linked (GlcNAc...) asparagine glycan. Positions glutamine 23 to arginine 134 are excised as a propeptide. Residues glutamine 135 to glutamine 335 enclose the Peptidase M12A domain. Cystine bridges form between cysteine 179–cysteine 334, cysteine 201–cysteine 222, cysteine 338–cysteine 358, cysteine 360–cysteine 369, cysteine 380–cysteine 408, and cysteine 435–cysteine 456. Histidine 230 lines the Zn(2+) pocket. Residue glutamate 231 is part of the active site. The Zn(2+) site is built by histidine 234 and histidine 240. One can recognise an EGF-like domain in the interval glutamine 330 to glutamine 370. Positions cysteine 380–threonine 494 constitute a CUB domain. Asparagine 503 carries an N-linked (GlcNAc...) asparagine glycan.

It depends on Zn(2+) as a cofactor.

Its subcellular location is the secreted. Metalloprotease. The protein is Zinc metalloproteinase nas-29 (nas-29) of Caenorhabditis elegans.